Here is a 1124-residue protein sequence, read N- to C-terminus: Phytochrome type A (1124 aa).

Residues 1–19 are compositionally biased toward low complexity; it reads MSTTRPSQSSNNSGRSRNS. Residues 1 to 21 form a disordered region; it reads MSTTRPSQSSNNSGRSRNSAR. The region spanning 218-401 is the GAF domain; sequence SMERLCDTMV…VFAIHVNKEI (184 aa). Residue Cys323 participates in phytochromobilin binding. PAS domains are found at residues 617–687 and 750–821; these read VTSE…LQGE and DYKA…VNFG. Positions 901–1120 constitute a Histidine kinase domain; sequence YMKRQIRNPL…ILSVELAAAH (220 aa).

Belongs to the phytochrome family. In terms of assembly, homodimer. Post-translationally, contains one covalently linked phytochromobilin chromophore.

Regulatory photoreceptor which exists in two forms that are reversibly interconvertible by light: the Pr form that absorbs maximally in the red region of the spectrum and the Pfr form that absorbs maximally in the far-red region. Photoconversion of Pr to Pfr induces an array of morphogenic responses, whereas reconversion of Pfr to Pr cancels the induction of those responses. Pfr controls the expression of a number of nuclear genes including those encoding the small subunit of ribulose-bisphosphate carboxylase, chlorophyll A/B binding protein, protochlorophyllide reductase, rRNA, etc. It also controls the expression of its own gene(s) in a negative feedback fashion. The sequence is that of Phytochrome type A (PHYA) from Lathyrus sativus (White vetchling).